Here is a 142-residue protein sequence, read N- to C-terminus: Phosphoribosyl-AMP cyclohydrolase (142 aa).

A Mg(2+)-binding site is contributed by Asp85. Residue Cys86 participates in Zn(2+) binding. Residues Asp87 and Asp89 each coordinate Mg(2+). Cys102 and Cys109 together coordinate Zn(2+). A disordered region spans residues 120 to 142 (GEPPTPVGAGERQPASGTADAAP).

The protein belongs to the PRA-CH family. As to quaternary structure, homodimer. The cofactor is Mg(2+). Zn(2+) serves as cofactor.

Its subcellular location is the cytoplasm. It catalyses the reaction 1-(5-phospho-beta-D-ribosyl)-5'-AMP + H2O = 1-(5-phospho-beta-D-ribosyl)-5-[(5-phospho-beta-D-ribosylamino)methylideneamino]imidazole-4-carboxamide. Its pathway is amino-acid biosynthesis; L-histidine biosynthesis; L-histidine from 5-phospho-alpha-D-ribose 1-diphosphate: step 3/9. Catalyzes the hydrolysis of the adenine ring of phosphoribosyl-AMP. The protein is Phosphoribosyl-AMP cyclohydrolase of Acidothermus cellulolyticus (strain ATCC 43068 / DSM 8971 / 11B).